A 411-amino-acid polypeptide reads, in one-letter code: LL-diaminopimelate aminotransferase 1 (411 aa).

Substrate contacts are provided by tyrosine 15 and glycine 42. Pyridoxal 5'-phosphate-binding positions include tyrosine 72, 108–109, tyrosine 132, asparagine 187, tyrosine 218, and 246–248; these read SK and SFS. Substrate contacts are provided by lysine 109, tyrosine 132, and asparagine 187. Lysine 249 carries the post-translational modification N6-(pyridoxal phosphate)lysine. 2 residues coordinate pyridoxal 5'-phosphate: arginine 257 and asparagine 292. Asparagine 292 and arginine 388 together coordinate substrate.

This sequence belongs to the class-I pyridoxal-phosphate-dependent aminotransferase family. LL-diaminopimelate aminotransferase subfamily. As to quaternary structure, homodimer. The cofactor is pyridoxal 5'-phosphate.

It carries out the reaction (2S,6S)-2,6-diaminopimelate + 2-oxoglutarate = (S)-2,3,4,5-tetrahydrodipicolinate + L-glutamate + H2O + H(+). The protein operates within amino-acid biosynthesis; L-lysine biosynthesis via DAP pathway; LL-2,6-diaminopimelate from (S)-tetrahydrodipicolinate (aminotransferase route): step 1/1. Its function is as follows. Involved in the synthesis of meso-diaminopimelate (m-DAP or DL-DAP), required for both lysine and peptidoglycan biosynthesis. Catalyzes the direct conversion of tetrahydrodipicolinate to LL-diaminopimelate. The polypeptide is LL-diaminopimelate aminotransferase 1 (Nostoc sp. (strain PCC 7120 / SAG 25.82 / UTEX 2576)).